The sequence spans 278 residues: DNA repair protein RecO (278 aa).

The span at 1–12 (MGTNDALTSTED) shows a compositional bias: polar residues. Residues 1–41 (MGTNDALTSTEDAVTAGANDAPLPAPPEPPRKARRATSRTS) form a disordered region.

Belongs to the RecO family.

Involved in DNA repair and RecF pathway recombination. The protein is DNA repair protein RecO of Burkholderia orbicola (strain AU 1054).